A 358-amino-acid polypeptide reads, in one-letter code: Histidinol-phosphate aminotransferase (358 aa).

At Lys-221 the chain carries N6-(pyridoxal phosphate)lysine.

The protein belongs to the class-II pyridoxal-phosphate-dependent aminotransferase family. Histidinol-phosphate aminotransferase subfamily. In terms of assembly, homodimer. Requires pyridoxal 5'-phosphate as cofactor.

It carries out the reaction L-histidinol phosphate + 2-oxoglutarate = 3-(imidazol-4-yl)-2-oxopropyl phosphate + L-glutamate. It functions in the pathway amino-acid biosynthesis; L-histidine biosynthesis; L-histidine from 5-phospho-alpha-D-ribose 1-diphosphate: step 7/9. In Caldicellulosiruptor saccharolyticus (strain ATCC 43494 / DSM 8903 / Tp8T 6331), this protein is Histidinol-phosphate aminotransferase.